Reading from the N-terminus, the 485-residue chain is UDP-N-acetylmuramate--L-alanine ligase (485 aa).

Position 112 to 118 (112 to 118 (GTHGKTT)) interacts with ATP.

It belongs to the MurCDEF family.

It localises to the cytoplasm. It carries out the reaction UDP-N-acetyl-alpha-D-muramate + L-alanine + ATP = UDP-N-acetyl-alpha-D-muramoyl-L-alanine + ADP + phosphate + H(+). Its pathway is cell wall biogenesis; peptidoglycan biosynthesis. Functionally, cell wall formation. This is UDP-N-acetylmuramate--L-alanine ligase from Variovorax paradoxus (strain S110).